The following is a 94-amino-acid chain: Small ribosomal subunit protein bS18 (94 aa).

Belongs to the bacterial ribosomal protein bS18 family. Part of the 30S ribosomal subunit. Forms a tight heterodimer with protein bS6.

Its function is as follows. Binds as a heterodimer with protein bS6 to the central domain of the 16S rRNA, where it helps stabilize the platform of the 30S subunit. In Polaromonas sp. (strain JS666 / ATCC BAA-500), this protein is Small ribosomal subunit protein bS18.